The sequence spans 114 residues: Large ribosomal subunit protein bL19 (114 aa).

It belongs to the bacterial ribosomal protein bL19 family.

This protein is located at the 30S-50S ribosomal subunit interface and may play a role in the structure and function of the aminoacyl-tRNA binding site. In Heliobacterium modesticaldum (strain ATCC 51547 / Ice1), this protein is Large ribosomal subunit protein bL19.